Reading from the N-terminus, the 939-residue chain is Trafficking kinesin-binding protein 1 (939 aa).

The region spanning 46 to 353 (LEEQLPHYKL…EELKNLRNKT (308 aa)) is the HAP1 N-terminal domain. Positions 106 to 354 (KTYNDIDAVT…ELKNLRNKTM (249 aa)) form a coiled coil. Residues 359-509 (RYHSLGLFPM…SLRRENYLSE (151 aa)) form an interaction with HGS region. The O-linked (GlcNAc) serine glycan is linked to Ser444. Residues 472–492 (LGNEDHNKKPGTPGTPGSHDL) are disordered. Residues 490–524 (HDLETALRRLSLRRENYLSERRFFEEEQERKLREL) are a coiled coil. A Phosphoserine modification is found at Ser534. The tract at residues 655–669 (PGKCMSQTNSTFTFT) is interaction with OGT. 2 O-linked (GlcNAc) serine glycosylation sites follow: Ser677 and Ser716. 2 positions are modified to phosphoserine: Ser716 and Ser905.

The protein belongs to the milton family. In terms of assembly, interacts with RHOT1 and RHOT2. Found in a complex with KIF5B, OGT, RHOT1 and RHOT2. Interacts with HGS. Interacts with GABRA1. Interacts with KIF5C. Interacts with OGT; stable interaction is not required for glycosylation of this protein by OGT. Isoform 1 interacts with OGT. Post-translationally, O-glycosylated. Glycosylated by OGT; glycosylation in response to increased extracellular glucose levels is required for and leads to regulation of mitochondrial motility by OGT. In terms of tissue distribution, widely expressed with the greatest expression in brain, liver and kidney. Detected throughout the CNS, including the cortex, hippocamps, thalamus and various subcortical nuclei of the forebrain and midbrain, the granule of Purkinje layers of the cerebellum and the gray matter of the spinal cord. High level detected in lower moter neurons (at protein level).

The protein resides in the cytoplasm. It localises to the nucleus. It is found in the mitochondrion. The protein localises to the early endosome. Its subcellular location is the endosome. The protein resides in the mitochondrion membrane. It localises to the cell cortex. Functionally, involved in the regulation of endosome-to-lysosome trafficking, including endocytic trafficking of EGF-EGFR complexes and GABA-A receptors. Involved in mitochondrial motility. When O-glycosylated, abolishes mitochondrial motility. Crucial for recruiting OGT to the mitochondrial surface of neuronal processes. TRAK1 and RHOT form an essential protein complex that links KIF5 to mitochondria for light chain-independent, anterograde transport of mitochondria. The polypeptide is Trafficking kinesin-binding protein 1 (Trak1) (Mus musculus (Mouse)).